Reading from the N-terminus, the 904-residue chain is Dual specificity tyrosine-phosphorylation-regulated kinase mbk-1 (904 aa).

Disordered regions lie at residues 1 to 151, 250 to 272, and 285 to 345; these read MNSG…MPPE, TVGR…ASSS, and AVPN…YNNG. Polar residues predominate over residues 9-23; that stretch reads NLQAWGQQPSSSYSN. Residues 24–35 are compositionally biased toward low complexity; the sequence is TQQQHGQITGQI. Residues 59 to 75 show a composition bias toward basic and acidic residues; sequence ELEKSKKIAEQPTEHPQ. The segment covering 112–123 has biased composition (low complexity); sequence NNSNSQNFFPQQ. A compositionally biased stretch (polar residues) spans 286 to 297; the sequence is VPNTSSSGNQPH. The region spanning 367 to 690 is the Protein kinase domain; that stretch reads ILSDTPVGKG…TLFPVSHTAY (324 aa). ATP-binding positions include 373 to 381 and lysine 396; that span reads VGKGSFGQV. Aspartate 495 acts as the Proton acceptor in catalysis. 2 disordered regions span residues 717–830 and 881–904; these read YRPV…DQAE and MSHG…NNKL. Residues 721-733 are compositionally biased toward polar residues; sequence PTSSHPISVTSSF. Positions 749–820 are enriched in low complexity; the sequence is SQQNYHNPNY…VQQHSSSSSR (72 aa). Polar residues predominate over residues 881–890; the sequence is MSHGNVNAGS. A compositionally biased stretch (basic and acidic residues) spans 892 to 904; sequence RDMEKHDYPNNKL.

Belongs to the protein kinase superfamily. CMGC Ser/Thr protein kinase family. MNB/DYRK subfamily. The cofactor is Mg(2+).

Its subcellular location is the nucleus. It catalyses the reaction L-seryl-[protein] + ATP = O-phospho-L-seryl-[protein] + ADP + H(+). The enzyme catalyses L-threonyl-[protein] + ATP = O-phospho-L-threonyl-[protein] + ADP + H(+). It carries out the reaction L-tyrosyl-[protein] + ATP = O-phospho-L-tyrosyl-[protein] + ADP + H(+). Possible role in the function of olfactory neurons. The polypeptide is Dual specificity tyrosine-phosphorylation-regulated kinase mbk-1 (Caenorhabditis briggsae).